A 285-amino-acid polypeptide reads, in one-letter code: Steroidogenic acute regulatory protein, mitochondrial (285 aa).

The N-terminal 63 residues, 1 to 63 (MLLATFKLCA…RQSSLLGSQL (63 aa)), are a transit peptide targeting the mitochondrion. 2 positions are modified to phosphoserine; by PKA: S57 and S195. The START domain maps to 67 to 280 (LYSDQELAYI…LRKRLESSPA (214 aa)).

In terms of assembly, may interact with TSPO.

It is found in the mitochondrion. It catalyses the reaction cholesterol(in) = cholesterol(out). The protein operates within steroid metabolism; cholesterol metabolism. Functionally, plays a key role in steroid hormone synthesis by enhancing the metabolism of cholesterol into pregnenolone. Mediates the transfer of cholesterol from the outer mitochondrial membrane to the inner mitochondrial membrane where it is cleaved to pregnenolone. The chain is Steroidogenic acute regulatory protein, mitochondrial (STAR) from Equus caballus (Horse).